The following is a 555-amino-acid chain: Anaerobic magnesium-protoporphyrin IX monomethyl ester cyclase (555 aa).

The B12-binding domain occupies 9 to 143 (NYHSGGAEIA…TAVDQGRFMA (135 aa)). One can recognise a Radical SAM core domain in the interval 191–416 (PMNKRVAIPN…MKPDAMDRGE (226 aa)). [4Fe-4S] cluster-binding residues include Cys-205, Cys-209, and Cys-212.

This sequence belongs to the BchE family. The cofactor is [4Fe-4S] cluster. Requires adenosylcob(III)alamin as cofactor.

The catalysed reaction is Mg-protoporphyrin IX 13-monomethyl ester + 3 S-adenosyl-L-methionine + H2O = 3,8-divinyl protochlorophyllide a + 3 5'-deoxyadenosine + 3 L-methionine + 4 H(+). Its pathway is porphyrin-containing compound metabolism; bacteriochlorophyll biosynthesis (light-independent). Functionally, involved in the tetrapyrrole biosynthetic pathways leading to chlorophyll and bacteriochlorophyll (BChl). Catalyzes the anaerobic formation of the isocyclic ring (E-ring) in Mg-protoporphyrin monomethyl ester (MPE) to yield protochlorophyllide a (PChlide a) via a six-electron oxidation and the formation of an oxo group at position C13 using oxygen from a water molecule. The protein is Anaerobic magnesium-protoporphyrin IX monomethyl ester cyclase (bchE) of Rubrivivax gelatinosus (Rhodocyclus gelatinosus).